We begin with the raw amino-acid sequence, 154 residues long: Endoribonuclease YbeY (154 aa).

Residues His113, His117, and His123 each contribute to the Zn(2+) site.

The protein belongs to the endoribonuclease YbeY family. Zn(2+) is required as a cofactor.

Its subcellular location is the cytoplasm. In terms of biological role, single strand-specific metallo-endoribonuclease involved in late-stage 70S ribosome quality control and in maturation of the 3' terminus of the 16S rRNA. The sequence is that of Endoribonuclease YbeY from Vibrio vulnificus (strain YJ016).